The primary structure comprises 414 residues: Glucose-1-phosphate adenylyltransferase (414 aa).

Alpha-D-glucose 1-phosphate-binding positions include Tyr103, Gly168, 183–184 (EK), and Ser201.

Belongs to the bacterial/plant glucose-1-phosphate adenylyltransferase family. Homotetramer.

The catalysed reaction is alpha-D-glucose 1-phosphate + ATP + H(+) = ADP-alpha-D-glucose + diphosphate. It functions in the pathway glycan biosynthesis; glycogen biosynthesis. Its function is as follows. Involved in the biosynthesis of ADP-glucose, a building block required for the elongation reactions to produce glycogen. Catalyzes the reaction between ATP and alpha-D-glucose 1-phosphate (G1P) to produce pyrophosphate and ADP-Glc. In Thermus caldophilus, this protein is Glucose-1-phosphate adenylyltransferase.